Here is an 88-residue protein sequence, read N- to C-terminus: Large ribosomal subunit protein bL27 (88 aa).

The disordered stretch occupies residues 1–21; that stretch reads MAHKKGQGSTQNNRDSAGRRL.

The protein belongs to the bacterial ribosomal protein bL27 family.

This is Large ribosomal subunit protein bL27 from Helicobacter acinonychis (strain Sheeba).